Reading from the N-terminus, the 192-residue chain is uncharacterized protein (192 aa).

The region spanning 29 to 160 (HRQAAVLIPI…PLDIYRRGDS (132 aa)) is the Nudix hydrolase domain. The Nudix box signature appears at 67–89 (GAVDDTDASVIAAALREAEEEVA). Mg(2+)-binding residues include glutamate 83 and glutamate 87.

It belongs to the Nudix hydrolase family. PCD1 subfamily. It depends on Mn(2+) as a cofactor. Requires Mg(2+) as cofactor.

Its function is as follows. Probably mediates the hydrolysis of some nucleoside diphosphate derivatives. This is an uncharacterized protein from Escherichia coli (strain SE11).